The primary structure comprises 1055 residues: Protein SUPPRESSOR OF QUENCHING 1, chloroplastic (1055 aa).

The N-terminal 56 residues, 1–56 (MALKLTSPPSVFSQSRRLSSSSLIPIRSKSTFTGFRSRTGVYLSKTTALQSSTKLS), are a transit peptide targeting the chloroplast. V57 carries the post-translational modification N-acetylvaline. Topologically, residues 59 to 327 (AESPAATIAT…FQGSRRDILR (269 aa)) are stromal. D80 serves as the catalytic Nucleophile. 2 residues coordinate Mg(2+): D80 and D82. A substrate-binding site is contributed by D80. The Proton donor role is filled by D82. Substrate is bound by residues E89, 118 to 122 (TGEAK), 141 to 144 (AKER), and 183 to 189 (SSADRIK). D242 provides a ligand contact to Mg(2+). A helical transmembrane segment spans residues 328–345 (YGSLGIALSCVYFAATNW). Residues 346-1055 (KAMQYASPKA…AGGLQLQGTR (710 aa)) are Lumenal-facing. The 178-residue stretch at 359 to 536 (ALVGAKSPSF…LDDVVAAALT (178 aa)) folds into the Thioredoxin domain. A disulfide bond links C431 and C434. 5 NHL repeats span residues 565–597 (PLKFPGKLAIDTLNNRLFISDSNHNRIIVTDLE), 611–647 (GFQDGSFEDAAFNRPQGLAYNAKKNLLYVADTENHAL), 673–712 (GRKGTKQLLNSPWDVCFEPVNEKVYIAMAGQHQIWEYSVL), 802–832 (LQHPLGVLCANDGQIYLTDSYNHKIKKLDPV), and 854–887 (GAQLSEPAGLAITENGRLFVADTNNSLIRYIDLN).

The protein in the N-terminal section; belongs to the HAD-like hydrolase superfamily. This sequence in the C-terminal section; belongs to the thioredoxin family. Requires Mg(2+) as cofactor.

The protein localises to the plastid. The protein resides in the chloroplast thylakoid membrane. Functionally, required to maintain light harvesting efficiency, especially during nonphotochemical quenching (NPQ) recovery, via the regulation of chlorophyll excited-state lifetime probably by preventing the formation of a slowly reversible form of antenna quenching. The chain is Protein SUPPRESSOR OF QUENCHING 1, chloroplastic from Arabidopsis thaliana (Mouse-ear cress).